We begin with the raw amino-acid sequence, 161 residues long: MTRGPVRLDVAISYALPRAGLPAAVSFRKWVAAALKGRIREADLAIRVVDAKEGQSLNRHYRGKDYATNVLSFPADVPEGLPKGVKFPLLGDLVICAPVVAREADEQGKALNAHYAHLTVHGVLHLLGWDHEDDKEAEAMEQLEREILAELGIADPYAGER.

Positions 121, 125, and 131 each coordinate Zn(2+).

It belongs to the endoribonuclease YbeY family. The cofactor is Zn(2+).

It is found in the cytoplasm. In terms of biological role, single strand-specific metallo-endoribonuclease involved in late-stage 70S ribosome quality control and in maturation of the 3' terminus of the 16S rRNA. The protein is Endoribonuclease YbeY of Stenotrophomonas maltophilia (strain R551-3).